The chain runs to 94 residues: Small ribosomal subunit protein bS18 (94 aa).

The protein belongs to the bacterial ribosomal protein bS18 family. In terms of assembly, part of the 30S ribosomal subunit. Forms a tight heterodimer with protein bS6.

Binds as a heterodimer with protein bS6 to the central domain of the 16S rRNA, where it helps stabilize the platform of the 30S subunit. The polypeptide is Small ribosomal subunit protein bS18 (Leptothrix cholodnii (strain ATCC 51168 / LMG 8142 / SP-6) (Leptothrix discophora (strain SP-6))).